A 380-amino-acid chain; its full sequence is Putative glutamate--cysteine ligase 2-2 (380 aa).

Belongs to the glutamate--cysteine ligase type 2 family. YbdK subfamily.

The catalysed reaction is L-cysteine + L-glutamate + ATP = gamma-L-glutamyl-L-cysteine + ADP + phosphate + H(+). Functionally, ATP-dependent carboxylate-amine ligase which exhibits weak glutamate--cysteine ligase activity. The polypeptide is Putative glutamate--cysteine ligase 2-2 (Nocardia farcinica (strain IFM 10152)).